Reading from the N-terminus, the 426-residue chain is Enolase (426 aa).

Glutamine 163 is a (2R)-2-phosphoglycerate binding site. The Proton donor role is filled by glutamate 205. Mg(2+)-binding residues include aspartate 242, glutamate 286, and aspartate 313. (2R)-2-phosphoglycerate is bound by residues lysine 338, arginine 367, serine 368, and lysine 389. Lysine 338 acts as the Proton acceptor in catalysis.

The protein belongs to the enolase family. It depends on Mg(2+) as a cofactor.

Its subcellular location is the cytoplasm. The protein resides in the secreted. It is found in the cell surface. It carries out the reaction (2R)-2-phosphoglycerate = phosphoenolpyruvate + H2O. The protein operates within carbohydrate degradation; glycolysis; pyruvate from D-glyceraldehyde 3-phosphate: step 4/5. Its function is as follows. Catalyzes the reversible conversion of 2-phosphoglycerate (2-PG) into phosphoenolpyruvate (PEP). It is essential for the degradation of carbohydrates via glycolysis. The protein is Enolase of Helicobacter pylori (strain P12).